We begin with the raw amino-acid sequence, 1097 residues long: DNA-directed RNA polymerase subunit beta (1097 aa).

Residues 1073 to 1097 (DVNPRRSTPSRPTYESLGVADYDED) form a disordered region.

This sequence belongs to the RNA polymerase beta chain family. In cyanobacteria the RNAP catalytic core is composed of 2 alpha, 1 beta, 1 beta', 1 gamma and 1 omega subunit. When a sigma factor is associated with the core the holoenzyme is formed, which can initiate transcription.

It catalyses the reaction RNA(n) + a ribonucleoside 5'-triphosphate = RNA(n+1) + diphosphate. Its function is as follows. DNA-dependent RNA polymerase catalyzes the transcription of DNA into RNA using the four ribonucleoside triphosphates as substrates. The polypeptide is DNA-directed RNA polymerase subunit beta (Synechococcus sp. (strain RCC307)).